Here is a 322-residue protein sequence, read N- to C-terminus: (12E)-labda-8(17),12,14-triene synthase (322 aa).

Residues 1 to 11 show a composition bias toward polar residues; it reads MNDATRTSTTP. The tract at residues 1–26 is disordered; it reads MNDATRTSTTPPALPMPDLRDSFPGP. Residues Asp93 and Glu98 each coordinate Mg(2+). Positions 93 to 98 match the DDXXXE motif motif; sequence DDAHGE. Residue Arg188 participates in substrate binding. Positions 234 and 238 each coordinate Mg(2+). The NXXXSXXXE motif signature appears at 234–242; it reads NDLASYAKE. Position 241 (Lys241) interacts with substrate. Glu242 serves as a coordination point for Mg(2+). Substrate is bound at residue 319 to 320; sequence RY.

It belongs to the terpene synthase family. Mg(2+) is required as a cofactor.

It carries out the reaction (+)-copalyl diphosphate = (12E)-labda-8(17),12,14-triene + diphosphate. In terms of biological role, involved in the biosynthesis of the labdane-type bicyclic diterpene labda-8(17),12(E),14-triene. Catalyzes the conversion of (+)-copalyl diphosphate to yield labda-8(17),12(E),14-triene. In Streptomyces anulatus (Streptomyces chrysomallus), this protein is (12E)-labda-8(17),12,14-triene synthase.